We begin with the raw amino-acid sequence, 545 residues long: Probable protein kinase UbiB (545 aa).

Positions 124 to 502 (DFDETPLASA…RRSQGLARFY (379 aa)) constitute a Protein kinase domain. ATP is bound by residues 130–138 (LASASIAQV) and lysine 153. The active-site Proton acceptor is aspartate 288. 2 helical membrane passes run 498 to 517 (LARF…AILF) and 521 to 540 (VETI…LLGW).

It belongs to the ABC1 family. UbiB subfamily.

It is found in the cell inner membrane. Its pathway is cofactor biosynthesis; ubiquinone biosynthesis [regulation]. Is probably a protein kinase regulator of UbiI activity which is involved in aerobic coenzyme Q (ubiquinone) biosynthesis. This is Probable protein kinase UbiB from Photobacterium profundum (strain SS9).